A 492-amino-acid chain; its full sequence is Bifunctional purine biosynthesis protein PurH (492 aa).

The 144-residue stretch at Met-1–Val-144 folds into the MGS-like domain.

It belongs to the PurH family.

It carries out the reaction (6R)-10-formyltetrahydrofolate + 5-amino-1-(5-phospho-beta-D-ribosyl)imidazole-4-carboxamide = 5-formamido-1-(5-phospho-D-ribosyl)imidazole-4-carboxamide + (6S)-5,6,7,8-tetrahydrofolate. The enzyme catalyses IMP + H2O = 5-formamido-1-(5-phospho-D-ribosyl)imidazole-4-carboxamide. Its pathway is purine metabolism; IMP biosynthesis via de novo pathway; 5-formamido-1-(5-phospho-D-ribosyl)imidazole-4-carboxamide from 5-amino-1-(5-phospho-D-ribosyl)imidazole-4-carboxamide (10-formyl THF route): step 1/1. The protein operates within purine metabolism; IMP biosynthesis via de novo pathway; IMP from 5-formamido-1-(5-phospho-D-ribosyl)imidazole-4-carboxamide: step 1/1. This chain is Bifunctional purine biosynthesis protein PurH, found in Staphylococcus aureus (strain JH1).